Consider the following 310-residue polypeptide: Translocator protein BipD (310 aa).

Coiled-coil stretches lie at residues 127–171 and 250–299; these read DPIL…LQDY and DTAR…AIST.

Belongs to the invasin protein D family.

It localises to the secreted. In terms of biological role, required for invasion of epithelial cells, as well as for survival within host cells, escape from endocytic vesicles and subsequent actin-tail formation. Probably regulates the secretion of effectors BipB and BipC and their final integration into the target cell membrane. This is Translocator protein BipD (bipD) from Burkholderia pseudomallei (strain 1106a).